A 680-amino-acid polypeptide reads, in one-letter code: Potassium-transporting ATPase ATP-binding subunit (680 aa).

The next 4 membrane-spanning stretches (helical) occupy residues 37–57 (VIFVTEAMAALVTLFFVLDVA), 69–89 (IAAWLWFTVLFATFAEAVAEG), 223–243 (ILLSGLTLIFLIAVVTLWGLA), and 257–277 (ALLVTLIPTTIGGLLSAIGIA). Asp-307 (4-aspartylphosphate intermediate) is an active-site residue. ATP-binding positions include Asp-344, Glu-348, 375–382 (FTAETRLS), and Lys-393. Residues Asp-516 and Asp-520 each coordinate Mg(2+). 3 helical membrane-spanning segments follow: residues 586-606 (FAIIPALFVTTYPALGVLNIM), 614-634 (AILSAVIFNALIIVALIPLAL), and 652-672 (LLVYGLGGLVLPFAGIKLIDL).

It belongs to the cation transport ATPase (P-type) (TC 3.A.3) family. Type IA subfamily. As to quaternary structure, the system is composed of three essential subunits: KdpA, KdpB and KdpC.

The protein resides in the cell inner membrane. The catalysed reaction is K(+)(out) + ATP + H2O = K(+)(in) + ADP + phosphate + H(+). Functionally, part of the high-affinity ATP-driven potassium transport (or Kdp) system, which catalyzes the hydrolysis of ATP coupled with the electrogenic transport of potassium into the cytoplasm. This subunit is responsible for energy coupling to the transport system and for the release of the potassium ions to the cytoplasm. This is Potassium-transporting ATPase ATP-binding subunit from Rhizobium meliloti (strain 1021) (Ensifer meliloti).